The primary structure comprises 344 residues: Methionine import ATP-binding protein MetN (344 aa).

Positions isoleucine 2–isoleucine 241 constitute an ABC transporter domain. Residue glycine 38–serine 45 coordinates ATP.

This sequence belongs to the ABC transporter superfamily. Methionine importer (TC 3.A.1.24) family. The complex is composed of two ATP-binding proteins (MetN), two transmembrane proteins (MetI) and a solute-binding protein (MetQ).

The protein resides in the cell inner membrane. The catalysed reaction is L-methionine(out) + ATP + H2O = L-methionine(in) + ADP + phosphate + H(+). The enzyme catalyses D-methionine(out) + ATP + H2O = D-methionine(in) + ADP + phosphate + H(+). In terms of biological role, part of the ABC transporter complex MetNIQ involved in methionine import. Responsible for energy coupling to the transport system. The polypeptide is Methionine import ATP-binding protein MetN (Vibrio vulnificus (strain YJ016)).